Here is a 288-residue protein sequence, read N- to C-terminus: Polyamine aminopropyltransferase (288 aa).

Positions 11 to 245 constitute a PABS domain; the sequence is IEWYPRGYGV…SPWSFLVGVK (235 aa). An S-methyl-5'-thioadenosine-binding site is contributed by Gln36. Positions 67 and 91 each coordinate spermidine. Residues Glu111 and 148–149 each bind S-methyl-5'-thioadenosine; that span reads DG. Asp166 acts as the Proton acceptor in catalysis. Residue 166–169 participates in spermidine binding; the sequence is DSTD. Residue Pro173 coordinates S-methyl-5'-thioadenosine.

Belongs to the spermidine/spermine synthase family. Homodimer or homotetramer.

The protein localises to the cytoplasm. It carries out the reaction S-adenosyl 3-(methylsulfanyl)propylamine + agmatine = N(1)-(3-aminopropyl)agmatine + S-methyl-5'-thioadenosine + H(+). The enzyme catalyses S-adenosyl 3-(methylsulfanyl)propylamine + putrescine = S-methyl-5'-thioadenosine + spermidine + H(+). It catalyses the reaction cadaverine + S-adenosyl 3-(methylsulfanyl)propylamine = aminopropylcadaverine + S-methyl-5'-thioadenosine + H(+). The protein operates within amine and polyamine biosynthesis; spermidine biosynthesis; spermidine from putrescine: step 1/1. Involved in the biosynthesis of polyamines which are thought to support the growth of thermophilic microorganisms under high-temperature conditions. It seems that long-chain and branched-chain of polyamines effectively stabilize DNA and RNA, respectively. Catalyzes the irreversible transfer of a propylamine group from the amino donor S-adenosylmethioninamine (decarboxy-AdoMet) to agmatine to yield N1-aminopropylagmatine. It can also use cadaverine (1,5-diaminopentane) and putrescine (1,4-diaminobutane) as substrate with a lower activity than that of agmatine. The reaction involves a nucleophilic attack on the C-3 methylene of the propylamine moiety adjacent to the positively charged sulfur of decarboxy-AdoMet. The chain is Polyamine aminopropyltransferase from Thermococcus kodakarensis (strain ATCC BAA-918 / JCM 12380 / KOD1) (Pyrococcus kodakaraensis (strain KOD1)).